The primary structure comprises 329 residues: Serpentine receptor class alpha-3 (329 aa).

Helical transmembrane passes span L25–I45, I57–I77, Y104–F124, G144–W164, T187–I207, I238–L258, and F273–I293.

It belongs to the nematode receptor-like protein sra family.

The protein resides in the membrane. The sequence is that of Serpentine receptor class alpha-3 (sra-3) from Caenorhabditis elegans.